Here is a 1517-residue protein sequence, read N- to C-terminus: DNA-directed RNA polymerase subunit beta' (1517 aa).

Positions 71, 73, 86, and 89 each coordinate Zn(2+). Residues Asp482, Asp484, and Asp486 each coordinate Mg(2+). Zn(2+)-binding residues include Cys812, Cys886, Cys893, and Cys896.

This sequence belongs to the RNA polymerase beta' chain family. The RNAP catalytic core consists of 2 alpha, 1 beta, 1 beta' and 1 omega subunit. When a sigma factor is associated with the core the holoenzyme is formed, which can initiate transcription. Mg(2+) serves as cofactor. Zn(2+) is required as a cofactor.

It catalyses the reaction RNA(n) + a ribonucleoside 5'-triphosphate = RNA(n+1) + diphosphate. In terms of biological role, DNA-dependent RNA polymerase catalyzes the transcription of DNA into RNA using the four ribonucleoside triphosphates as substrates. The chain is DNA-directed RNA polymerase subunit beta' from Campylobacter lari (strain RM2100 / D67 / ATCC BAA-1060).